A 93-amino-acid chain; its full sequence is Small ribosomal subunit protein uS19 (93 aa).

The protein belongs to the universal ribosomal protein uS19 family.

Protein S19 forms a complex with S13 that binds strongly to the 16S ribosomal RNA. This Campylobacter concisus (strain 13826) protein is Small ribosomal subunit protein uS19.